The primary structure comprises 633 residues: Pesticidal crystal protein Cry2Ab (633 aa).

The protein belongs to the delta endotoxin family.

In terms of biological role, promotes colloidosmotic lysis by binding to the midgut epithelial cells of lepidopteran (Manduca sexta) larvae. The polypeptide is Pesticidal crystal protein Cry2Ab (cry2Ab) (Bacillus thuringiensis subsp. kurstaki).